The following is a 118-amino-acid chain: Small ribosomal subunit protein uS13 (118 aa).

Residues 92 to 118 form a disordered region; that stretch reads KKHLPVRGQRTKTNARTRKGPRKPIKK.

It belongs to the universal ribosomal protein uS13 family. Part of the 30S ribosomal subunit. Forms a loose heterodimer with protein S19. Forms two bridges to the 50S subunit in the 70S ribosome.

Functionally, located at the top of the head of the 30S subunit, it contacts several helices of the 16S rRNA. In the 70S ribosome it contacts the 23S rRNA (bridge B1a) and protein L5 of the 50S subunit (bridge B1b), connecting the 2 subunits; these bridges are implicated in subunit movement. Contacts the tRNAs in the A and P-sites. The protein is Small ribosomal subunit protein uS13 of Wigglesworthia glossinidia brevipalpis.